The primary structure comprises 255 residues: Putative keratin-87 protein (255 aa).

One can recognise an IF rod domain in the interval 1–255 (MEANSGRLAS…SRGCVRALVL (255 aa)). Coiled coils occupy residues 19 to 81 (LEGY…EIRV) and 147 to 227 (LRRT…VMNS).

It belongs to the intermediate filament family. Heterotetramer of two type I and two type II keratins.

The chain is Putative keratin-87 protein (KRT87P) from Homo sapiens (Human).